Here is a 167-residue protein sequence, read N- to C-terminus: MMLTIIMLSKIFMSSLISMILTIYLNNIFNSPSMLLIYLISYSIYMSLMMFTMCSMNSLLILMILIVFLSGMLIMFSYFISLINEPLKLKMKPFIQTLFLIIITMKIYNKLSQNEHYFNYFKNIDLMYLYMKMNSTLFFIMILMLIITLILMTKITYIEKKTLRKKK.

Transmembrane regions (helical) follow at residues 5 to 25 (IIMLSKIFMSSLISMILTIYL), 34 to 54 (MLLIYLISYSIYMSLMMFTMC), 60 to 80 (LILMILIVFLSGMLIMFSYFI), and 138 to 158 (FFIMILMLIITLILMTKITYI).

The protein belongs to the complex I subunit 6 family.

It is found in the mitochondrion membrane. It catalyses the reaction a ubiquinone + NADH + 5 H(+)(in) = a ubiquinol + NAD(+) + 4 H(+)(out). In terms of biological role, core subunit of the mitochondrial membrane respiratory chain NADH dehydrogenase (Complex I) that is believed to belong to the minimal assembly required for catalysis. Complex I functions in the transfer of electrons from NADH to the respiratory chain. The immediate electron acceptor for the enzyme is believed to be ubiquinone. This is NADH-ubiquinone oxidoreductase chain 6 (ND6) from Apis mellifera ligustica (Common honeybee).